The primary structure comprises 151 residues: UPF0719 transmembrane protein MAP_1032c (151 aa).

4 helical membrane passes run 20–40 (VATILYFAVGMAVLLVGFYAV), 60–80 (AVVVAGAMYIALTVVIITAIA), 90–110 (LVGVAVYGLMGVILLGVALLA), and 130–150 (PGSFAVALILLAVGGVTAAAV).

The protein belongs to the UPF0719 family.

The protein resides in the cell membrane. This Mycolicibacterium paratuberculosis (strain ATCC BAA-968 / K-10) (Mycobacterium paratuberculosis) protein is UPF0719 transmembrane protein MAP_1032c.